The primary structure comprises 305 residues: ATP synthase gamma chain (305 aa).

This sequence belongs to the ATPase gamma chain family. F-type ATPases have 2 components, CF(1) - the catalytic core - and CF(0) - the membrane proton channel. CF(1) has five subunits: alpha(3), beta(3), gamma(1), delta(1), epsilon(1). CF(0) has three main subunits: a, b and c.

Its subcellular location is the cell membrane. Produces ATP from ADP in the presence of a proton gradient across the membrane. The gamma chain is believed to be important in regulating ATPase activity and the flow of protons through the CF(0) complex. The sequence is that of ATP synthase gamma chain from Streptomyces avermitilis (strain ATCC 31267 / DSM 46492 / JCM 5070 / NBRC 14893 / NCIMB 12804 / NRRL 8165 / MA-4680).